The chain runs to 328 residues: Biotin synthase (328 aa).

One can recognise a Radical SAM core domain in the interval 48–278; it reads FTGNSASLCS…GKSLSVCGGR (231 aa). Residues Cys-66, Cys-70, and Cys-73 each contribute to the [4Fe-4S] cluster site. [2Fe-2S] cluster-binding residues include Ser-143 and Cys-203.

The protein belongs to the radical SAM superfamily. Biotin synthase family. As to quaternary structure, homodimer. It depends on [4Fe-4S] cluster as a cofactor. [2Fe-2S] cluster serves as cofactor.

It carries out the reaction (4R,5S)-dethiobiotin + (sulfur carrier)-SH + 2 reduced [2Fe-2S]-[ferredoxin] + 2 S-adenosyl-L-methionine = (sulfur carrier)-H + biotin + 2 5'-deoxyadenosine + 2 L-methionine + 2 oxidized [2Fe-2S]-[ferredoxin]. It participates in cofactor biosynthesis; biotin biosynthesis; biotin from 7,8-diaminononanoate: step 2/2. Catalyzes the conversion of dethiobiotin (DTB) to biotin by the insertion of a sulfur atom into dethiobiotin via a radical-based mechanism. The sequence is that of Biotin synthase from Pelobacter propionicus (strain DSM 2379 / NBRC 103807 / OttBd1).